Consider the following 210-residue polypeptide: Small ribosomal subunit protein uS3 (210 aa).

Residues 38–106 (LRSFLKKRLY…EVYLNIQEVR (69 aa)) form the KH type-2 domain.

It belongs to the universal ribosomal protein uS3 family. Part of the 30S ribosomal subunit. Forms a tight complex with proteins S10 and S14.

In terms of biological role, binds the lower part of the 30S subunit head. Binds mRNA in the 70S ribosome, positioning it for translation. The chain is Small ribosomal subunit protein uS3 from Geotalea uraniireducens (strain Rf4) (Geobacter uraniireducens).